A 364-amino-acid chain; its full sequence is Aspartate aminotransferase (364 aa).

Residues G23, W99, and N143 each contribute to the L-aspartate site. K200 bears the N6-(pyridoxal phosphate)lysine mark. Residue R320 participates in L-aspartate binding.

The protein belongs to the class-I pyridoxal-phosphate-dependent aminotransferase family. In terms of assembly, homodimer. Requires pyridoxal 5'-phosphate as cofactor.

It is found in the cytoplasm. It carries out the reaction L-aspartate + 2-oxoglutarate = oxaloacetate + L-glutamate. This is Aspartate aminotransferase (aspC) from Thermococcus kodakarensis (strain ATCC BAA-918 / JCM 12380 / KOD1) (Pyrococcus kodakaraensis (strain KOD1)).